The sequence spans 933 residues: MAKISLKLDELIDGEALRREMTALTTATAGDGSGAAARAGVLQLLKARLAEGRKIAEAMLKEDGGGNACAERLSHLMDELIRALYDFAATHVYRVKNRSSAERMAVVAVGGYGRGTLAPGSDIDLLFLLPYKQTPWGEQTVEYMLYMLWDLGLKVGHATRNIDECLRLSRTDITIRTSILEARFLWGERKLYDELMLRFDHEVVRTTGPEYVQAKLAERDERHAKAGESRYLVEPNVKDGKGGLRDLQTLFWIGKYFYRVRTGEELVEKGVFTEAEYREFQKAEDFLWAVRCHMHFLTGKAEERLHFDIQREIAERLGYTTHPGLSAVERFMKHYFLVAKDVGDLTRIFCAALEEEQAKHVPGFNRIFLTFQRRKRKLAGTSDFIVDNHRINIADDQVFERDPVNLLRLFWFADKHGLEFHPDALKLLTRSLGLVNKSLRRDEEANRLFLDILTSDRNAELNLRRMNEAGLLGRLIPDFGKIVAMMQFSMYHHYTVDEHLIRCIGVLAEIERGDGEKVHPLSHSLMPGLKKSREALYVAVLLHDIAKGRPEDHSEAGARIARRICPHMGLSAADTETVAWLVENHLAMSMTAQTRDLNDRKTIEDFASIVQSVERLKLLLVLTVCDIRGVGPGVWNGWKGQLLRTLYYETELLLTGGFSEVSRAQRTAAARERLAEALADWPDKDRKRYVGLHYENYLLTVDLPDQLRHAEFVREADAAGKKLATMVKTHQFEAVTEITVLAQDHPRLLSVIAGACVGAGGNIVDAQIFTTADGRALDTILISREFDRDEDERRRAERVGRLIEDVLSGKSWLPEMIEKRTKPKRGAKVFKIPPRAEIRNTLSNRFSVIEVEGLDRPGLLSEITGTLSDLSLDIASAHITTFGEKVIDTFYVTDLTGQKIDSPARIATIRNRLMATLEGIAPERGGKAKAAAE.

Residues 1 to 379 (MAKISLKLDE…TFQRRKRKLA (379 aa)) are uridylyltransferase. The segment at 380–736 (GTSDFIVDNH…VKTHQFEAVT (357 aa)) is uridylyl-removing. The HD domain maps to 496–619 (VDEHLIRCIG…VQSVERLKLL (124 aa)). ACT domains lie at 737-818 (EITV…EMIE) and 848-922 (VIEV…GIAP).

The protein belongs to the GlnD family. The cofactor is Mg(2+).

The catalysed reaction is [protein-PII]-L-tyrosine + UTP = [protein-PII]-uridylyl-L-tyrosine + diphosphate. It catalyses the reaction [protein-PII]-uridylyl-L-tyrosine + H2O = [protein-PII]-L-tyrosine + UMP + H(+). With respect to regulation, uridylyltransferase (UTase) activity is inhibited by glutamine, while glutamine activates uridylyl-removing (UR) activity. In terms of biological role, modifies, by uridylylation and deuridylylation, the PII regulatory proteins (GlnB and homologs), in response to the nitrogen status of the cell that GlnD senses through the glutamine level. Under low glutamine levels, catalyzes the conversion of the PII proteins and UTP to PII-UMP and PPi, while under higher glutamine levels, GlnD hydrolyzes PII-UMP to PII and UMP (deuridylylation). Thus, controls uridylylation state and activity of the PII proteins, and plays an important role in the regulation of nitrogen fixation and metabolism. In Mesorhizobium japonicum (strain LMG 29417 / CECT 9101 / MAFF 303099) (Mesorhizobium loti (strain MAFF 303099)), this protein is Bifunctional uridylyltransferase/uridylyl-removing enzyme.